We begin with the raw amino-acid sequence, 91 residues long: Large ribosomal subunit protein eL37B (91 aa).

The Zn(2+) site is built by Cys-19, Cys-22, Cys-34, and Cys-37. The C4-type zinc finger occupies 19-37; the sequence is CRRCGKRSFHIQKSTCACC.

The protein belongs to the eukaryotic ribosomal protein eL37 family. As to quaternary structure, component of the large ribosomal subunit (LSU). Mature yeast ribosomes consist of a small (40S) and a large (60S) subunit. The 40S small subunit contains 1 molecule of ribosomal RNA (18S rRNA) and at least 33 different proteins. The large 60S subunit contains 3 rRNA molecules (25S, 5.8S and 5S rRNA) and at least 46 different proteins. Zn(2+) serves as cofactor.

The protein resides in the cytoplasm. Component of the ribosome, a large ribonucleoprotein complex responsible for the synthesis of proteins in the cell. The small ribosomal subunit (SSU) binds messenger RNAs (mRNAs) and translates the encoded message by selecting cognate aminoacyl-transfer RNA (tRNA) molecules. The large subunit (LSU) contains the ribosomal catalytic site termed the peptidyl transferase center (PTC), which catalyzes the formation of peptide bonds, thereby polymerizing the amino acids delivered by tRNAs into a polypeptide chain. The nascent polypeptides leave the ribosome through a tunnel in the LSU and interact with protein factors that function in enzymatic processing, targeting, and the membrane insertion of nascent chains at the exit of the ribosomal tunnel. This chain is Large ribosomal subunit protein eL37B (rpl3702), found in Schizosaccharomyces pombe (strain 972 / ATCC 24843) (Fission yeast).